The chain runs to 643 residues: Phosphomethylpyrimidine synthase (643 aa).

Substrate is bound by residues asparagine 248, methionine 277, tyrosine 306, histidine 342, 362-364, 403-406, and glutamate 442; these read SRG and DGLR. Histidine 446 is a Zn(2+) binding site. Tyrosine 469 is a binding site for substrate. Histidine 510 is a binding site for Zn(2+). [4Fe-4S] cluster contacts are provided by cysteine 590, cysteine 593, and cysteine 598.

Belongs to the ThiC family. Homodimer. The cofactor is [4Fe-4S] cluster.

The enzyme catalyses 5-amino-1-(5-phospho-beta-D-ribosyl)imidazole + S-adenosyl-L-methionine = 4-amino-2-methyl-5-(phosphooxymethyl)pyrimidine + CO + 5'-deoxyadenosine + formate + L-methionine + 3 H(+). Its pathway is cofactor biosynthesis; thiamine diphosphate biosynthesis. In terms of biological role, catalyzes the synthesis of the hydroxymethylpyrimidine phosphate (HMP-P) moiety of thiamine from aminoimidazole ribotide (AIR) in a radical S-adenosyl-L-methionine (SAM)-dependent reaction. The sequence is that of Phosphomethylpyrimidine synthase from Burkholderia pseudomallei (strain 1106a).